A 202-amino-acid chain; its full sequence is Matrix protein (202 aa).

The PPXY motif motif lies at 35 to 38; sequence PPES. The interval 115–151 is essential for glycoprotein binding; the sequence is KIRRTLVFQWAESRGPLDGEELEYSQEITWDDDSEFI.

It belongs to the lyssavirus matrix protein family. In terms of assembly, homomultimer. Interacts with nucleoprotein and with the cytoplasmic domain of glycoprotein.

The protein resides in the virion membrane. Its subcellular location is the host endomembrane system. Its function is as follows. Plays a major role in assembly and budding of virion. Completely covers the ribonucleoprotein coil and keep it in condensed bullet-shaped form. Inhibits viral transcription and stimulates replication. Plays a major role in early induction of TRAIL-mediated apoptosis in infected neurons. This is Matrix protein (M) from Myotis mystacinus (Whiskered bat).